Reading from the N-terminus, the 421-residue chain is ATP-dependent RNA helicase RhlB (421 aa).

The short motif at 9-37 (THFADLPINEQVVKALSAANFSHCTPIQA) is the Q motif element. Residues 40 to 216 (LPPLLEGNDI…YEHMDNPTHV (177 aa)) enclose the Helicase ATP-binding domain. 53–60 (AQTGTGKT) is a binding site for ATP. The short motif at 162-165 (DEAD) is the DEAD box element. The Helicase C-terminal domain maps to 240-387 (KMALLLSLME…VTEYQADALL (148 aa)). The interval 389–421 (DVTPPKPRHKKRMQNGRNPQKRQSSGSRNRRKP) is disordered. Positions 403 to 415 (NGRNPQKRQSSGS) are enriched in polar residues.

It belongs to the DEAD box helicase family. RhlB subfamily. As to quaternary structure, component of the RNA degradosome, which is a multiprotein complex involved in RNA processing and mRNA degradation.

It localises to the cytoplasm. It catalyses the reaction ATP + H2O = ADP + phosphate + H(+). In terms of biological role, DEAD-box RNA helicase involved in RNA degradation. Has RNA-dependent ATPase activity and unwinds double-stranded RNA. The sequence is that of ATP-dependent RNA helicase RhlB from Pseudoalteromonas atlantica (strain T6c / ATCC BAA-1087).